The primary structure comprises 286 residues: MVAVIIKGNEVAEKKRAQLTEEVVKLKEQGIVPGLAVILVGEDPASRSYVKGKEKGCEQVGIYSELIEFPETITEERLLAEIDRLNGDDRINGILVQLPLPKHIEEKAIIERISPEKDVDGFHPISVGRMMTGQDTFLPCTPHGIVELVKETNLDISGKHVVVIGRSNIVGKPVGQLFLNENATVTYCHSKTQNMKELTKLADILIVAVGRPKMVTADYLKEGAVVIDVGVNRLETGKLCGDVDFDNVLDVAGYITPVPKGVGPMTITMLLHNTVESAKRAGVVCK.

Residues 165-167 (GRS), Ser-190, and Val-231 each bind NADP(+).

The protein belongs to the tetrahydrofolate dehydrogenase/cyclohydrolase family. As to quaternary structure, homodimer.

The catalysed reaction is (6R)-5,10-methylene-5,6,7,8-tetrahydrofolate + NADP(+) = (6R)-5,10-methenyltetrahydrofolate + NADPH. It carries out the reaction (6R)-5,10-methenyltetrahydrofolate + H2O = (6R)-10-formyltetrahydrofolate + H(+). It participates in one-carbon metabolism; tetrahydrofolate interconversion. Functionally, catalyzes the oxidation of 5,10-methylenetetrahydrofolate to 5,10-methenyltetrahydrofolate and then the hydrolysis of 5,10-methenyltetrahydrofolate to 10-formyltetrahydrofolate. This is Bifunctional protein FolD from Bacillus cereus (strain ATCC 10987 / NRS 248).